The chain runs to 287 residues: Nucleotide-binding protein Asuc_0930 (287 aa).

8 to 15 (GRSGAGKS) is a binding site for ATP. 56–59 (DIRN) lines the GTP pocket.

Belongs to the RapZ-like family.

In terms of biological role, displays ATPase and GTPase activities. The protein is Nucleotide-binding protein Asuc_0930 of Actinobacillus succinogenes (strain ATCC 55618 / DSM 22257 / CCUG 43843 / 130Z).